Here is a 235-residue protein sequence, read N- to C-terminus: Orotidine 5'-phosphate decarboxylase (235 aa).

Substrate is bound by residues D12, K34, 61 to 70 (DMKLLDIDNT), T116, R177, Q186, and R207. The Proton donor role is filled by K63.

It belongs to the OMP decarboxylase family. Type 1 subfamily. Homodimer.

It carries out the reaction orotidine 5'-phosphate + H(+) = UMP + CO2. The protein operates within pyrimidine metabolism; UMP biosynthesis via de novo pathway; UMP from orotate: step 2/2. Its function is as follows. Catalyzes the decarboxylation of orotidine 5'-monophosphate (OMP) to uridine 5'-monophosphate (UMP). The chain is Orotidine 5'-phosphate decarboxylase from Agrobacterium fabrum (strain C58 / ATCC 33970) (Agrobacterium tumefaciens (strain C58)).